A 283-amino-acid chain; its full sequence is Coiled-coil domain-containing protein 107 (283 aa).

Residues 1 to 24 form the signal peptide; the sequence is MAGAVSLLGVVGLLLVSALSGVLG. The segment at 30–62 is disordered; sequence DLRAHPGNAAHPGSGATEPRRRPPLKDQRERTR. Over residues 47–62 the composition is skewed to basic and acidic residues; it reads EPRRRPPLKDQRERTR. Residues 65-85 traverse the membrane as a helical segment; sequence SLPLGALYTAAVAAFVLYKCL. The stretch at 104–134 forms a coiled coil; it reads LQSEQQLAQLTQQLAQTEQHLNNLMAQLDPL. 2 disordered regions span residues 164–207 and 258–283; these read KPDK…SRPL and AKGP…SLFS. Over residues 176–187 the composition is skewed to gly residues; sequence EGSGGESAGGGD.

The protein resides in the membrane. This Homo sapiens (Human) protein is Coiled-coil domain-containing protein 107 (CCDC107).